Consider the following 322-residue polypeptide: Serine protease 38 (322 aa).

The signal sequence occupies residues 1–28; sequence MAALTSGLGVLGYLLFPLLLASPTWVTS. The propeptide at 29–55 is activation peptide; sequence VSRRHPKSQANSLSGDVACGQPVLQGK. The Peptidase S1 domain maps to 56 to 289; sequence LLGGEFARDR…FLSWIRYHLQ (234 aa). The cysteines at positions 81 and 97 are disulfide-linked. Active-site charge relay system residues include H96 and D146. N176 carries N-linked (GlcNAc...) asparagine glycosylation. 3 disulfides stabilise this stretch: C179-C247, C210-C226, and C237-C265. Catalysis depends on S241, which acts as the Charge relay system. N-linked (GlcNAc...) asparagine glycosylation is found at N250 and N276.

It belongs to the peptidase S1 family.

The protein localises to the secreted. In Mus musculus (Mouse), this protein is Serine protease 38 (Prss38).